The chain runs to 361 residues: 5-exo-hydroxycamphor dehydrogenase (361 aa).

Residues cysteine 40, histidine 62, cysteine 98, cysteine 101, cysteine 104, and cysteine 170 each contribute to the Zn(2+) site.

It belongs to the zinc-containing alcohol dehydrogenase family. It depends on Zn(2+) as a cofactor.

It catalyses the reaction (1R,4R,5R)-5-hydroxycamphor + NAD(+) = (1R,4R)-bornane-2,5-dione + NADH + H(+). The protein operates within terpene metabolism; (R)-camphor degradation. The chain is 5-exo-hydroxycamphor dehydrogenase (camD) from Pseudomonas putida (Arthrobacter siderocapsulatus).